Consider the following 101-residue polypeptide: MDKSKQLFRKSKGSFRRRLPPIGSGDRIDYRNMSLISRFISEQGKILSRRVNRLTLKQQRLITIAIKQARILFSLPFLNNEKQFERTESIPRPTGPRSRNK.

The span at 1-19 (MDKSKQLFRKSKGSFRRRL) shows a compositional bias: basic residues. The interval 1 to 23 (MDKSKQLFRKSKGSFRRRLPPIG) is disordered.

It belongs to the bacterial ribosomal protein bS18 family. In terms of assembly, part of the 30S ribosomal subunit.

It is found in the plastid. It localises to the chloroplast. This Acorus gramineus (Dwarf sweet flag) protein is Small ribosomal subunit protein bS18c.